A 766-amino-acid chain; its full sequence is General transcription and DNA repair factor IIH helicase/translocase subunit XPB2 (766 aa).

The disordered stretch occupies residues 1-56 (MGNDERKRPTKKMKYGGKDDQKMKNIQNVEDYYDDADEDSRDGEGEEKRRDFTDLE). Residues 31 to 41 (DYYDDADEDSR) show a composition bias toward acidic residues. A compositionally biased stretch (basic and acidic residues) spans 42–56 (DGEGEEKRRDFTDLE). The 163-residue stretch at 293 to 455 (MFGNGRARSG…DLNFLIGPKL (163 aa)) folds into the Helicase ATP-binding domain. Residue 306–313 (LPCGAGKS) coordinates ATP. Residues 408–411 (DEVH) carry the DEVH box motif. One can recognise a Helicase C-terminal domain in the interval 510 to 676 (RACEFLIRFH…SLPPPDAGSS (167 aa)). Residues 739-748 (SGRQKSGNQS) show a composition bias toward polar residues. The segment at 739–766 (SGRQKSGNQSKKPKDPTKRHNIFKKRYV) is disordered. The Nuclear localization signal signature appears at 749 to 765 (KKPKDPTKRHNIFKKRY). Residues 757–766 (RHNIFKKRYV) show a composition bias toward basic residues.

It belongs to the helicase family. RAD25/XPB subfamily. Component of the 7-subunit TFIIH core complex composed of XPB, XPD, TFB1/GTF2H1, GTF2H2/P44, TFB4/GTF2H3, TFB2/GTF2H4 and TFB5/GTF2H5, which is active in NER. The core complex associates with the 3-subunit CDK-activating kinase (CAK) module composed of CYCH1/cyclin H1, CDKD and MAT1/At4g30820 to form the 10-subunit holoenzyme (holo-TFIIH) active in transcription. In terms of tissue distribution, expressed ubiquitously.

Its subcellular location is the nucleus. The catalysed reaction is Couples ATP hydrolysis with the unwinding of duplex DNA by translocating in the 3'-5' direction.. It catalyses the reaction ATP + H2O = ADP + phosphate + H(+). Its function is as follows. ATP-dependent 3'-5' DNA helicase/translocase; binds dsDNA rather than ssDNA, unzipping it in a translocase rather than classical helicase activity. Component of the general transcription and DNA repair factor IIH (TFIIH) core complex. When complexed to CDK-activating kinase (CAK), involved in RNA transcription by RNA polymerase II. The ATPase activity of XPB/ERCC3, but not its helicase activity, is required for DNA opening; it may wrap around the damaged DNA wedging it open, causing localized melting and twisting that allows XPD/ERCC2 helicase to anchor. The ATP-dependent helicase activity of XPB/ERCC3 may be required for promoter escape. Also involved in transcription-coupled nucleotide excision repair (NER) of damaged DNA. In NER, TFIIH acts by opening DNA around the lesion to allow the excision of the damaged oligonucleotide and its replacement by a new DNA fragment. The structure of the TFIIH transcription complex differs from the NER-TFIIH complex. Partially complements UV sensitivity of a yeast SSL2 mutation. This chain is General transcription and DNA repair factor IIH helicase/translocase subunit XPB2 (XPB2), found in Arabidopsis thaliana (Mouse-ear cress).